The chain runs to 67 residues: Peptide Hp1239 (67 aa).

The N-terminal stretch at 1-23 (MKTQFTVLLITLVLFQMLSQSEA) is a signal peptide. Residue F36 is modified to Phenylalanine amide. Residues 40 to 67 (GLSDLSDLDELFDGEITKADLDLLREIM) constitute a propeptide that is removed on maturation.

This sequence belongs to the non-disulfide-bridged peptide (NDBP) superfamily. Short antimicrobial peptide (group 4) family. As to expression, expressed by the venom gland.

Its subcellular location is the secreted. The protein resides in the target cell membrane. In terms of biological role, amphipathic peptide with antibacterial activities. Shows antiviral activities against the herpes simplex virus type-1. It potently inhibits the initial infection by provoking the rupture of viral envelop and the dissociation of proteins from the virions (EC(50) is 0.41 uM). It also effectively inhibits viral attachment (EC(50) is 5.73 uM), viral entry (EC(50) is 4.32 uM) and viral proliferation after infection (EC(50) is 8.41 uM). Morever, it enters mammalian tested cells (Vero) and reduces the intracellular infectivity. This chain is Peptide Hp1239, found in Heterometrus petersii (Asian forest scorpion).